A 263-amino-acid chain; its full sequence is Ribonuclease HII (263 aa).

The RNase H type-2 domain occupies 71-262 (QAIAGIDEVG…VKSMCCDSTN (192 aa)). A divalent metal cation is bound by residues D77, E78, and D172.

This sequence belongs to the RNase HII family. It depends on Mn(2+) as a cofactor. Mg(2+) serves as cofactor.

The protein localises to the cytoplasm. The enzyme catalyses Endonucleolytic cleavage to 5'-phosphomonoester.. Its function is as follows. Endonuclease that specifically degrades the RNA of RNA-DNA hybrids. This is Ribonuclease HII from Streptococcus pyogenes serotype M5 (strain Manfredo).